A 191-amino-acid chain; its full sequence is Clusterin (191 aa).

Asn-79, Asn-116, Asn-142, and Asn-162 each carry an N-linked (GlcNAc...) asparagine glycan. Ser-184 is modified (phosphoserine).

The protein belongs to the clusterin family. In terms of assembly, antiparallel disulfide-linked heterodimer of an alpha chain and a beta chain. Self-associates and forms higher oligomers. Interacts with a broad range of misfolded proteins, including APP, APOC2 and LYZ. Slightly acidic pH promotes interaction with misfolded proteins. Forms high-molecular weight oligomers upon interaction with misfolded proteins. Interacts with APOA1, LRP2, CLUAP1 and PON1. Interacts with the complement membrane attack complex. Interacts (via alpha chain) with XRCC6. Interacts with SYVN1, COMMD1, BTRC, CUL1 and with ubiquitin and SCF (SKP1-CUL1-F-box protein) E3 ubiquitin-protein ligase complexes. Interacts (via alpha chain) with BAX in stressed cells, where BAX undergoes a conformation change leading to association with the mitochondrial membrane. Does not interact with BAX in unstressed cells. Found in a complex with LTF, CLU, EPPIN and SEMG1. Interacts (immaturely glycosylated pre-secreted form) with HSPA5; this interaction promotes CLU stability and facilitates stress-induced CLU retrotranslocation from the secretory pathway to the mitochondria, thereby reducing stress-induced apoptosis by stabilizing mitochondrial membrane integrity. Interacts with BCL2L1; this interaction releases and activates BAX and promotes cell death. Interacts with TGFBR2 and ACVR1. Interacts (secreted form) with STMN3; this interaction may act as an important modulator during neuronal differentiation. In terms of processing, proteolytically cleaved on its way through the secretory system, probably within the Golgi lumen. Proteolytic cleavage is not necessary for its chaperone activity. All non-secreted forms are not proteolytically cleaved. Chaperone activity of uncleaved forms is dependent on a non-reducing environment. Polyubiquitinated, leading to proteasomal degradation. Under cellular stress, the intracellular level of cleaved form is reduced due to proteasomal degradation. Post-translationally, heavily N-glycosylated. About 30% of the protein mass is comprised of complex N-linked carbohydrate. Endoplasmic reticulum (ER) stress induces changes in glycosylation status and increases level of hypoglycosylated forms. Core carbohydrates are essential for chaperone activity. Non-secreted forms are hypoglycosylated or unglycosylated.

The protein resides in the secreted. It localises to the nucleus. The protein localises to the cytoplasm. Its subcellular location is the mitochondrion membrane. It is found in the cytosol. The protein resides in the microsome. It localises to the endoplasmic reticulum. The protein localises to the mitochondrion. Its subcellular location is the perinuclear region. It is found in the cytoplasmic vesicle. The protein resides in the secretory vesicle. It localises to the chromaffin granule. Its function is as follows. Functions as extracellular chaperone that prevents aggregation of non native proteins. Prevents stress-induced aggregation of blood plasma proteins. Inhibits formation of amyloid fibrils by APP, APOC2, B2M, CALCA, CSN3, SNCA and aggregation-prone LYZ variants (in vitro). Does not require ATP. Maintains partially unfolded proteins in a state appropriate for subsequent refolding by other chaperones, such as HSPA8/HSC70. Does not refold proteins by itself. Binding to cell surface receptors triggers internalization of the chaperone-client complex and subsequent lysosomal or proteasomal degradation. When secreted, protects cells against apoptosis and against cytolysis by complement: inhibits assembly of the complement membrane attack complex (MAC) by preventing polymerization of C9 pore component of the MAC complex. Intracellular forms interact with ubiquitin and SCF (SKP1-CUL1-F-box protein) E3 ubiquitin-protein ligase complexes and promote the ubiquitination and subsequent proteasomal degradation of target proteins. Promotes proteasomal degradation of COMMD1 and IKBKB. Modulates NF-kappa-B transcriptional activity. Following stress, promotes apoptosis. Inhibits apoptosis when associated with the mitochondrial membrane by interference with BAX-dependent release of cytochrome c into the cytoplasm. Plays a role in the regulation of cell proliferation. An intracellular form suppresses stress-induced apoptosis by stabilizing mitochondrial membrane integrity through interaction with HSPA5. Secreted form does not affect caspase or BAX-mediated intrinsic apoptosis and TNF-induced NF-kappa-B-activity. Secreted form act as an important modulator during neuronal differentiation through interaction with STMN3. Plays a role in the clearance of immune complexes that arise during cell injury. The polypeptide is Clusterin (Mesocricetus auratus (Golden hamster)).